We begin with the raw amino-acid sequence, 448 residues long: NADP-specific glutamate dehydrogenase (448 aa).

Substrate is bound by residues Lys88, Gln109, and Lys112. Lys124 acts as the Proton donor in catalysis. Position 163 (Gly163) interacts with substrate. Thr207 and Asn238 together coordinate NADP(+). Residue Ser381 participates in substrate binding.

It belongs to the Glu/Leu/Phe/Val dehydrogenases family. As to quaternary structure, homohexamer.

The enzyme catalyses L-glutamate + NADP(+) + H2O = 2-oxoglutarate + NH4(+) + NADPH + H(+). Its function is as follows. Catalyzes the reversible oxidative deamination of glutamate to alpha-ketoglutarate and ammonia. This chain is NADP-specific glutamate dehydrogenase (gdhA), found in Helicobacter pylori (strain ATCC 700392 / 26695) (Campylobacter pylori).